The chain runs to 143 residues: Sirohydrochlorin cobaltochelatase (143 aa).

His-9 (proton acceptor) is an active-site residue. His-9 is a binding site for Co(2+). His-9 contributes to the Ni(2+) binding site. Substrate contacts are provided by residues Glu-45 and 70 to 75; that span reads LAHGNH. His-75 contributes to the Co(2+) binding site. Residue His-75 participates in Ni(2+) binding.

The protein belongs to the CbiX family. CbiXS subfamily. Homotetramer; dimer of dimers.

It catalyses the reaction Co-sirohydrochlorin + 2 H(+) = sirohydrochlorin + Co(2+). It carries out the reaction Ni-sirohydrochlorin + 2 H(+) = sirohydrochlorin + Ni(2+). It participates in cofactor biosynthesis; adenosylcobalamin biosynthesis; cob(II)yrinate a,c-diamide from sirohydrochlorin (anaerobic route): step 1/10. Catalyzes the insertion of Co(2+) into sirohydrochlorin as part of the anaerobic pathway to cobalamin biosynthesis. Involved in the biosynthesis of the unique nickel-containing tetrapyrrole coenzyme F430, the prosthetic group of methyl-coenzyme M reductase (MCR), which plays a key role in methanogenesis and anaerobic methane oxidation. Catalyzes the insertion of Ni(2+) into sirohydrochlorin to yield Ni-sirohydrochlorin. The polypeptide is Sirohydrochlorin cobaltochelatase (Methanococcus aeolicus (strain ATCC BAA-1280 / DSM 17508 / OCM 812 / Nankai-3)).